A 582-amino-acid polypeptide reads, in one-letter code: Pineapple eye protein (582 aa).

A C2HC pre-PHD-type zinc finger spans residues Glu-6 to Leu-44. Residues Glu-6–Arg-119 form an extended PHD domain (ePHD) region. The PHD-type; atypical zinc-finger motif lies at Arg-72–Arg-119. Disordered stretches follow at residues Pro-292–Phe-311 and Arg-323–Ile-422. Polar residues predominate over residues Ser-340–Pro-363. Positions Ser-383 to Ser-399 are enriched in basic and acidic residues.

Its function is as follows. Required for survival of imaginal disk cells possibly by regulation of cell apoptosis. Required for germline stem cell self-renewal through mediation of BMP signaling. The polypeptide is Pineapple eye protein (Drosophila melanogaster (Fruit fly)).